Consider the following 265-residue polypeptide: uncharacterized protein (265 aa).

The interval 122 to 145 (THYRDNGQTPPRDTRPHGGISLGG) is disordered.

This is an uncharacterized protein from Zymomonas mobilis subsp. mobilis (strain ATCC 31821 / ZM4 / CP4).